The following is a 226-amino-acid chain: Prolactin (226 aa).

The signal sequence occupies residues 1–29 (MNSQGSDRKAVTLLLLVMSNLLFCQNAHP). Cys-33 and Cys-38 are oxidised to a cystine. Residues Ser-53 and Ser-117 each carry the phosphoserine modification. Disulfide bonds link Cys-85–Cys-201 and Cys-218–Cys-226.

Belongs to the somatotropin/prolactin family. As to quaternary structure, interacts with PRLR.

Its subcellular location is the secreted. Functionally, prolactin acts primarily on the mammary gland by promoting lactation. The protein is Prolactin (PRL) of Mesocricetus auratus (Golden hamster).